Reading from the N-terminus, the 78-residue chain is MCDDSYDAVEEYYFNKSVAGISGQENWNKQLATQVYSRSLQPEILPTLKPLSCNKERANAGKRVSEEEQINGKRKRKD.

The segment covering Glu56–Glu66 has biased composition (basic and acidic residues). The interval Glu56 to Asp78 is disordered.

This is an uncharacterized protein from Saccharomyces cerevisiae (strain ATCC 204508 / S288c) (Baker's yeast).